An 89-amino-acid chain; its full sequence is Small ribosomal subunit protein uS15 (89 aa).

This sequence belongs to the universal ribosomal protein uS15 family. In terms of assembly, part of the 30S ribosomal subunit. Forms a bridge to the 50S subunit in the 70S ribosome, contacting the 23S rRNA.

Functionally, one of the primary rRNA binding proteins, it binds directly to 16S rRNA where it helps nucleate assembly of the platform of the 30S subunit by binding and bridging several RNA helices of the 16S rRNA. Forms an intersubunit bridge (bridge B4) with the 23S rRNA of the 50S subunit in the ribosome. This is Small ribosomal subunit protein uS15 from Histophilus somni (strain 129Pt) (Haemophilus somnus).